The following is a 466-amino-acid chain: uncharacterized protein (466 aa).

The interval Met-1–Lys-22 is disordered. Positions Arg-7–Tyr-19 are enriched in polar residues. A phosphoserine mark is found at Ser-40 and Ser-42. The region spanning Tyr-108–His-183 is the RRM domain. Residues Arg-186–Asp-207 form a disordered region. Basic and acidic residues predominate over residues Pro-188–Asp-207. One can recognise a CID domain in the interval Leu-209–Thr-368. Ser-371 bears the Phosphoserine mark. Positions Ser-425–Pro-436 are enriched in low complexity. Residues Ser-425–Phe-448 form a disordered region.

It localises to the nucleus. The protein resides in the cytoplasm. This is an uncharacterized protein from Schizosaccharomyces pombe (strain 972 / ATCC 24843) (Fission yeast).